We begin with the raw amino-acid sequence, 320 residues long: MSTPMIFAIPSKGRLKDQVEAWLADCGFKLEMTGGARGYSAELSGLPGVSVRLLSAGDIAAGLDSGDLHLGVTGEDLLRERGDDMDSRVMLLRALGFGRADLVVTAPKNWLDVDTMADVDEVGHAHLARTGRRLRVATKYVTQTRAFFARHGVADYRIVESSGATEGAPAAGAAELVVDITTTGATLAANGLKILSDGVILKSQAQLTASLTAGWNGEQLDALRRLLSVVEAKGRAGKLATLVWPAEQDRAAQDAVAAFIARGGSRRANGALLATADLFDAAAALAEAGVEPVTVSRPDYVFESRSAVLDRFAEALKSKI.

Belongs to the ATP phosphoribosyltransferase family. Long subfamily. Mg(2+) serves as cofactor.

It is found in the cytoplasm. It carries out the reaction 1-(5-phospho-beta-D-ribosyl)-ATP + diphosphate = 5-phospho-alpha-D-ribose 1-diphosphate + ATP. It participates in amino-acid biosynthesis; L-histidine biosynthesis; L-histidine from 5-phospho-alpha-D-ribose 1-diphosphate: step 1/9. Its activity is regulated as follows. Feedback inhibited by histidine. In terms of biological role, catalyzes the condensation of ATP and 5-phosphoribose 1-diphosphate to form N'-(5'-phosphoribosyl)-ATP (PR-ATP). Has a crucial role in the pathway because the rate of histidine biosynthesis seems to be controlled primarily by regulation of HisG enzymatic activity. In Caulobacter vibrioides (strain ATCC 19089 / CIP 103742 / CB 15) (Caulobacter crescentus), this protein is ATP phosphoribosyltransferase (hisG).